The sequence spans 743 residues: Peptide transporter family 1 (743 aa).

Residues Met1–Pro28 form a disordered region. Low complexity predominate over residues Asn7–Asn16. Transmembrane regions (helical) follow at residues Val74–Ala94, Ile104–Pro124, Ala132–Val152, Phe173–Ile193, Phe207–Ala227, Val334–Ala354, Leu364–Leu384, Leu597–Tyr619, Val629–Ala649, and Gly659–Ala679.

The protein belongs to the major facilitator superfamily. Proton-dependent oligopeptide transporter (POT/PTR) (TC 2.A.17) family. Expressed in thorax and abdomen of females: apical epithelial membranes of midgut, rectum, and reproductive tract. Also expressed in neuropil of the central nervous system, with elevated expression within the alpha- and beta-lobes of the mushroom bodies.

It is found in the membrane. Functionally, important role in absorption of dietary peptides. High-affinity transporter of alanylalanine. Dipeptide transport activity is proton dependent. The protein is Peptide transporter family 1 (yin) of Drosophila melanogaster (Fruit fly).